We begin with the raw amino-acid sequence, 145 residues long: uncharacterized protein (145 aa).

This is an uncharacterized protein from Escherichia coli (strain K12).